The sequence spans 62 residues: Potassium channel toxin alpha-KTx Tx790 (62 aa).

The signal sequence occupies residues 1-18 (MQKLFIVLVLFCILRLDA). 3 disulfide bridges follow: cysteine 28–cysteine 46, cysteine 33–cysteine 59, and cysteine 37–cysteine 61.

Belongs to the short scorpion toxin superfamily. Potassium channel inhibitor family. Alpha-KTx 23 subfamily. In terms of tissue distribution, expressed by the venom gland.

Its subcellular location is the secreted. May block potassium channels. The polypeptide is Potassium channel toxin alpha-KTx Tx790 (Buthus israelis (Israeli scorpion)).